We begin with the raw amino-acid sequence, 648 residues long: RAF proto-oncogene serine/threonine-protein kinase (648 aa).

Ser-29 carries the post-translational modification Phosphoserine; by MAPK1. Position 43 is a phosphoserine; by PKA and MAPK1 (Ser-43). The 76-residue stretch at 56–131 (NTIRVFLPNK…IGEELQVDFL (76 aa)) folds into the RBD domain. The Phorbol-ester/DAG-type zinc finger occupies 138–184 (THNFARKTFLKLAFCDICQKFLLNGFRCQTCGYKFHEHCSTKVPTMC). The Zn(2+) site is built by His-139, Cys-152, Cys-155, Cys-165, Cys-168, His-173, Cys-176, and Cys-184. The segment at 220 to 334 (SVSRMPVSSQ…QEKNKIRPRG (115 aa)) is disordered. The segment covering 239-271 (TFNTSSPSSEGSLSQRQRSTSTPNVHMVSTTLP) has biased composition (polar residues). At Ser-252 the chain carries Phosphoserine. Ser-259 bears the Phosphoserine; by PKA, PKC and PKB/AKT1 mark. A Phosphothreonine; by autocatalysis modification is found at Thr-268. At Thr-269 the chain carries Phosphothreonine; by PKA. The span at 275-285 (RMIEDAIRSHS) shows a compositional bias: basic and acidic residues. A compositionally biased stretch (low complexity) spans 286–301 (ESASPSALSSSPNNLS). Residue Ser-289 is modified to Phosphoserine; by MAPK1. Position 296 is a phosphoserine (Ser-296). Ser-301 is modified (phosphoserine; by MAPK1). The tract at residues 331–349 (RPRGQRDSSYYWEIEASEV) is interaction with PEBP1/RKIP. At Ser-338 the chain carries Phosphoserine; by PAK1, PAK2, PAK3 and PAK5. Ser-339 is modified (phosphoserine; by PAK1, PAK2 and PAK3). Phosphotyrosine; by SRC occurs at positions 340 and 341. Positions 349–609 (VMLSTRIGSG…PQILSSIELL (261 aa)) constitute a Protein kinase domain. ATP contacts are provided by residues 355 to 363 (IGSGSFGTV) and Lys-375. Catalysis depends on Asp-468, which acts as the Proton acceptor. Ser-471 bears the Phosphoserine mark. A Phosphothreonine modification is found at Thr-491. Phosphoserine is present on Ser-494. A Phosphoserine; by PKC modification is found at Ser-499. Symmetric dimethylarginine; by PRMT5 is present on Arg-563. Ser-621 is modified (phosphoserine). The residue at position 642 (Ser-642) is a Phosphoserine; by MAPK1.

This sequence belongs to the protein kinase superfamily. TKL Ser/Thr protein kinase family. RAF subfamily. In terms of assembly, monomer. Homodimer. Heterodimerizes with BRAF and this heterodimer possesses a highly increased kinase activity compared to the respective homodimers or monomers. Heterodimerization is mitogen-regulated and enhanced by 14-3-3 proteins. MAPK1/ERK2 activation can induce a negative feedback that promotes the dissociation of the heterodimer. Forms a multiprotein complex with Ras (M-Ras/MRAS), SHOC2 and protein phosphatase 1 (PPP1CA, PPP1CB and PPP1CC). Interacts with LZTR1. Interacts with Ras proteins; the interaction is antagonized by RIN1. Weakly interacts with RIT1. Interacts (via N-terminus) with RGS14 (via RBD domains); the interaction mediates the formation of a ternary complex with BRAF, a ternary complex inhibited by GNAI1. Probably forms a complex composed of chaperones HSP90 and HSP70, co-chaperones CDC37, PPP5C, TSC1 and client protein TSC2, CDK4, AKT, RAF1 and NR3C1; this complex does not contain co-chaperones STIP1/HOP and PTGES3/p23. Interacts with STK3/MST2; the interaction inhibits its pro-apoptotic activity. Interacts (when phosphorylated at Ser-259) with YWHAZ (unphosphorylated at 'Thr-232'). Interacts with MAP2K1/MEK1 and MAP2K2/MEK2. Interacts with MAP3K5/ASF1 (via N-terminus) and this interaction inhibits the proapoptotic function of MAP3K5/ASK1. Interacts with PAK1 (via kinase domain). The phosphorylated form interacts with PIN1. The Ser-338 and Ser-339 phosphorylated form (by PAK1) interacts with BCL2. Interacts with PEBP1/RKIP and this interaction is enhanced if RAF1 is phosphorylated on residues Ser-338, Ser-339, Tyr-340 and Tyr-341. Interacts with ADCY2, ADCY5, ADCY6, DGKH, RCAN1/DSCR1, PPP1R12A, PKB/AKT1, PPP2CA, PPP2R1B, SPRY2, SPRY4, CNKSR1/CNK1, KSR2 and PHB/prohibitin. Interacts with ROCK2. In its active form, interacts with PRMT5. Interacts with FAM83B; displaces 14-3-3 proteins from RAF1 and activates RAF1. Interacts with PDE8A; the interaction promotes RAF1 activity. Interacts with MFHAS1. Interacts with GLS. Interacts with NEK10 and MAP2K1; the interaction is direct with NEK10 and required for ERK1/2-signaling pathway activation in response to UV irradiation. The cofactor is Zn(2+). Phosphorylation at Thr-269, Ser-338, Tyr-341, Thr-491 and Ser-494 results in its activation. Phosphorylation at Ser-29, Ser-43, Ser-289, Ser-296, Ser-301 and Ser-642 by MAPK1/ERK2 results in its inactivation. Phosphorylation at Ser-259 induces the interaction with YWHAZ and inactivates kinase activity. Dephosphorylation of Ser-259 by the SHOC2-MRAS-PP1c (SMP) complex consisting of SHOC2, GTP-bound M-Ras/MRAS and the catalytic subunit of protein phosphatase 1 (PPP1CA, PPP1CB or PPP1CC); this relieves inactivation and stimulates kinase activity. Phosphorylation at Ser-338 by PAK1 and PAK5 and Ser-339 by PAK1 is required for its mitochondrial localization. Phosphorylation at Ser-621 in response to growth factor treatment stabilizes the protein, possibly by preventing proteasomal degradation. Phosphorylation at Ser-289, Ser-296, Ser-301, Ser-338 and Ser-621 are somehow linked to the methylation potential of cells. Treatment of cells with HGF in the presence of the methylation inhibitor 5'-methylthioadenosine (MTA) results in increased phosphorylation at Ser-338 and Ser-621 and decreased phosphorylation at Ser-296, Ser-301 and Ser-338. Dephosphorylation at Ser-338 by PPP5C results in an activity decrease. In terms of processing, methylated at Arg-563 in response to EGF treatment. This modification leads to destabilization of the protein, possibly through proteasomal degradation. In skeletal muscle, isoform 1 is more abundant than isoform 2.

The protein resides in the cytoplasm. It is found in the cell membrane. It localises to the mitochondrion. Its subcellular location is the nucleus. It catalyses the reaction L-seryl-[protein] + ATP = O-phospho-L-seryl-[protein] + ADP + H(+). It carries out the reaction L-threonyl-[protein] + ATP = O-phospho-L-threonyl-[protein] + ADP + H(+). Its activity is regulated as follows. Regulation is a highly complex process involving membrane recruitment, protein-protein interactions, dimerization, and phosphorylation/dephosphorylation events. Ras-GTP recruits RAF1 to the membrane, thereby promoting its activation. The inactive conformation of RAF1 is maintained by autoinhibitory interactions occurring between the N-terminal regulatory and the C-terminal catalytic domains and by the binding of a 14-3-3 protein that contacts two phosphorylation sites, Ser-259 and Ser-621. Upon mitogenic stimulation, Ras and PPP2R1A cooperate to release autoinhibition and the subsequent phosphorylation of activating sites: Ser-338, Tyr-341, Thr-491, and Ser-494, yields a fully active kinase. Through a negative feedback mechanism involving MAPK1/ERK2, RAF1 is phosphorylated on Ser-29, Ser-43, Ser-289, Ser-296, Ser-301 and Ser-642 by MAPK1/ERK2, which yields an inactive, desensitized kinase. The signaling-competent conformation of RAF1 is finally re-established by the coordinated action of PIN1, a prolyl isomerase that converts pSer and pThr residues from the cis to the trans conformation, which is preferentially recognized and dephosphorylated by PPP2R1A. Activated by homodimerization and heterodimerization (with BRAF). Also regulated through association with other proteins such as KSR2, CNKSR1/CNK1, PEBP1/RKIP, PHB/prohibitin and SPRY4. PEBP1/RKIP acts by dissociating RAF1 from its substrates MAP2K1/MEK1 and MAP2K2/MEK2. PHB/prohibitin facilitates the displacement of 14-3-3 from RAF1 by activated Ras, thereby promoting cell membrane localization and phosphorylation of RAF1 at the activating Ser-338. SPRY4 inhibits Ras-independent, but not Ras-dependent, activation of RAF1. CNKSR1/CNK1 regulates Src-mediated RAF1 activation. Serine/threonine-protein kinase that acts as a regulatory link between the membrane-associated Ras GTPases and the MAPK/ERK cascade, and this critical regulatory link functions as a switch determining cell fate decisions including proliferation, differentiation, apoptosis, survival and oncogenic transformation. RAF1 activation initiates a mitogen-activated protein kinase (MAPK) cascade that comprises a sequential phosphorylation of the dual-specific MAPK kinases (MAP2K1/MEK1 and MAP2K2/MEK2) and the extracellular signal-regulated kinases (MAPK3/ERK1 and MAPK1/ERK2). The phosphorylated form of RAF1 (on residues Ser-338 and Ser-339, by PAK1) phosphorylates BAD/Bcl2-antagonist of cell death at 'Ser-75'. Phosphorylates adenylyl cyclases: ADCY2, ADCY5 and ADCY6, resulting in their activation. Phosphorylates PPP1R12A resulting in inhibition of the phosphatase activity. Phosphorylates TNNT2/cardiac muscle troponin T. Can promote NF-kB activation and inhibit signal transducers involved in motility (ROCK2), apoptosis (MAP3K5/ASK1 and STK3/MST2), proliferation and angiogenesis (RB1). Can protect cells from apoptosis also by translocating to the mitochondria where it binds BCL2 and displaces BAD/Bcl2-antagonist of cell death. Regulates Rho signaling and migration, and is required for normal wound healing. Plays a role in the oncogenic transformation of epithelial cells via repression of the TJ protein, occludin (OCLN) by inducing the up-regulation of a transcriptional repressor SNAI2/SLUG, which induces down-regulation of OCLN. Restricts caspase activation in response to selected stimuli, notably Fas stimulation, pathogen-mediated macrophage apoptosis, and erythroid differentiation. The polypeptide is RAF proto-oncogene serine/threonine-protein kinase (Homo sapiens (Human)).